The primary structure comprises 302 residues: NAD kinase 2 (302 aa).

D79 (proton acceptor) is an active-site residue. Residues 79–80, 153–154, D183, 194–199, A218, and N252 each bind NAD(+); these read DG, NE, and TAYSLS.

It belongs to the NAD kinase family. A divalent metal cation is required as a cofactor.

The protein resides in the cytoplasm. It catalyses the reaction NAD(+) + ATP = ADP + NADP(+) + H(+). Its function is as follows. Involved in the regulation of the intracellular balance of NAD and NADP, and is a key enzyme in the biosynthesis of NADP. Catalyzes specifically the phosphorylation on 2'-hydroxyl of the adenosine moiety of NAD to yield NADP. The polypeptide is NAD kinase 2 (Prochlorococcus marinus subsp. pastoris (strain CCMP1986 / NIES-2087 / MED4)).